The chain runs to 199 residues: Imidazole glycerol phosphate synthase subunit HisH (199 aa).

Residues 2–199 (RAVIIDYGVG…LTNVYRWLRK (198 aa)) enclose the Glutamine amidotransferase type-1 domain. Cys-76 functions as the Nucleophile in the catalytic mechanism. Active-site residues include His-178 and Glu-180.

As to quaternary structure, heterodimer of HisH and HisF.

It is found in the cytoplasm. It catalyses the reaction 5-[(5-phospho-1-deoxy-D-ribulos-1-ylimino)methylamino]-1-(5-phospho-beta-D-ribosyl)imidazole-4-carboxamide + L-glutamine = D-erythro-1-(imidazol-4-yl)glycerol 3-phosphate + 5-amino-1-(5-phospho-beta-D-ribosyl)imidazole-4-carboxamide + L-glutamate + H(+). The catalysed reaction is L-glutamine + H2O = L-glutamate + NH4(+). The protein operates within amino-acid biosynthesis; L-histidine biosynthesis; L-histidine from 5-phospho-alpha-D-ribose 1-diphosphate: step 5/9. Functionally, IGPS catalyzes the conversion of PRFAR and glutamine to IGP, AICAR and glutamate. The HisH subunit catalyzes the hydrolysis of glutamine to glutamate and ammonia as part of the synthesis of IGP and AICAR. The resulting ammonia molecule is channeled to the active site of HisF. This is Imidazole glycerol phosphate synthase subunit HisH from Sulfolobus acidocaldarius (strain ATCC 33909 / DSM 639 / JCM 8929 / NBRC 15157 / NCIMB 11770).